The chain runs to 354 residues: Protein RecA (354 aa).

Residue 67–74 coordinates ATP; that stretch reads GPESSGKT.

The protein belongs to the RecA family.

It localises to the cytoplasm. In terms of biological role, can catalyze the hydrolysis of ATP in the presence of single-stranded DNA, the ATP-dependent uptake of single-stranded DNA by duplex DNA, and the ATP-dependent hybridization of homologous single-stranded DNAs. It interacts with LexA causing its activation and leading to its autocatalytic cleavage. This chain is Protein RecA, found in Serratia marcescens.